Consider the following 108-residue polypeptide: MSFAGLNDADVAAALAACTAADSFNHKAFFAKVGLASKSSDDVKKAFYVIDQDKSGFIEEDELKLFLQNFSASARALTDAETKAFLADGDKDGDGMIGVDEFAAMIKG.

S2 is modified (N-acetylserine). EF-hand domains lie at K38 to S73 and L77 to G108. The Ca(2+) site is built by D51, D53, S55, F57, E59, E62, D90, D92, D94, M96, and E101.

This sequence belongs to the parvalbumin family.

Functionally, in muscle, parvalbumin is thought to be involved in relaxation after contraction. It binds two calcium ions. The polypeptide is Parvalbumin beta 2 (Salmo salar (Atlantic salmon)).